A 7570-amino-acid chain; its full sequence is Dystonin (7570 aa).

Calponin-homology (CH) domains follow at residues 35 to 138 (KVQK…LHFQ) and 151 to 255 (MSAK…DAFP). An actin-binding region spans residues 35–252 (KVQKKTFTKW…VITYVSSLYD (218 aa)). Residues leucine 135, lysine 184, serine 236, and serine 237 each carry the phosphoserine modification. Spectrin repeat units lie at residues 602–699 (EINM…RHLD) and 701–802 (LHNF…QHIK). The region spanning 887-944 (KTSIPIKAICDYRQIEITIYKDDECVLANNSHRAKWKVISPTGNEAMVPSVCFTVPPP) is the SH3 domain. Spectrin repeat units lie at residues 1293-1422 (KYYR…KFAG) and 1440-1540 (KEHV…QESQ). Residue serine 1382 is modified to Phosphoserine. The Nuclear localization signal; in isoform 6 motif lies at 1383–1389 (PVKRRRM). Glutamate 1565 bears the Phosphoserine mark. Plectin repeat units follow at residues 1584 to 1626 (IRLL…QLKE), 1660 to 1703 (KVLE…LERQ), 1774 to 1817 (RLLS…LTYQ), 1818 to 1855 (VQTG…LEAQ), and 1856 to 1891 (RGYV…KILN). Serine 2229 bears the Phosphoserine mark. Disordered stretches follow at residues 2317-2346 (SNTS…IEEY), 2383-2441 (LLND…DETA), and 2585-2616 (DYIY…GKPR). A compositionally biased stretch (acidic residues) spans 2336–2345 (DKEDESEIEE). The segment covering 2385–2394 (NDQQNNTGTD) has biased composition (low complexity). Acidic residues-rich tracts occupy residues 2395–2412 (TDSD…DDDH), 2430–2439 (YDTLQEENDE), and 2591–2605 (NDQD…DEEG). The residue at position 2919 (serine 2919) is a Phosphoserine. A disordered region spans residues 3190 to 3221 (EASTVPSDSQMSDSSGVSPMTNSSELKPESRD). The span at 3192 to 3209 (STVPSDSQMSDSSGVSPM) shows a compositional bias: low complexity. 28 Spectrin repeats span residues 3395–3501 (LQHT…KQIM), 3643–3752 (QEYK…KELD), 3926–4040 (EKFD…NNLK), 4047–4153 (QHYE…EKLQ), 4160–4259 (LSVQ…ETLA), 4269–4368 (ELFE…EAVT), 4516–4621 (QKAQ…QKLE), 4628–4732 (TQFQ…DWID), 4742–4842 (QSLL…QHLQ), 4849–4951 (HQFQ…NKLK), 4958–5058 (LKYK…FCLE), 5068–5167 (QEVS…SFLE), 5174–5277 (GHFQ…EQVE), 5284–5388 (EEFY…AQLQ), 5395–5497 (GRFQ…RQLE), 5504–5715 (QQFH…KTLE), 5831–5933 (QQFD…LQLE), 5941–6041 (QFWE…VALD), 6048–6154 (TQFH…AKLL), 6161–6263 (EKFW…DKLE), 6270–6373 (VQYQ…HKLE), 6380–6482 (GQFQ…QQLD), 6489–6591 (KGFH…TKLE), 6598–6700 (MEFH…RSLD), 6707–6810 (KQFH…NKLE), 6817–6918 (GQFT…TRLE), 6925–7027 (EEFH…QRLA), and 7037–7167 (QELL…RKLN). Phosphoserine is present on serine 3968. Position 4749 is a phosphoserine (serine 4749). Lysine 5470 is covalently cross-linked (Glycyl lysine isopeptide (Lys-Gly) (interchain with G-Cter in ubiquitin)). 2 consecutive EF-hand domains span residues 7197 to 7232 (HKKS…SKFP) and 7233 to 7268 (TSRL…NKDA). Residues aspartate 7210, aspartate 7212, aspartate 7214, lysine 7216, glutamate 7221, aspartate 7246, aspartate 7248, aspartate 7250, tyrosine 7252, and glutamate 7257 each contribute to the Ca(2+) site. One can recognise a GAR domain in the interval 7273–7351 (TDADKIEDEV…EFLVKNDPCR (79 aa)). 3 disordered regions span residues 7358 to 7379 (KMLR…AKGR), 7395 to 7452 (SQGM…SKLR), and 7481 to 7570 (QFAD…SSKR). Over residues 7362-7374 (SESNSSITTTQPT) the composition is skewed to polar residues. 2 stretches are compositionally biased toward low complexity: residues 7411–7441 (SSRG…TTTP) and 7490–7504 (SRPG…GSRA). Phosphoserine is present on serine 7432. A phosphoserine mark is found at serine 7510, serine 7513, and serine 7525. A compositionally biased stretch (polar residues) spans 7519–7535 (EIQSVCSDVETVPQTHR). The Microtubule tip localization signal signature appears at 7550-7553 (SKIP).

Homodimer. Isoform 1 interacts (via N-terminus) with PLEC (via N-terminus). Interacts with the neuronal intermediate filament protein, PRPH. Interacts with DES. Interacts with SYNE3. Isoform 1 and isoform 6 can homodimerize (via N-terminus). Isoform 1 interacts (via N-terminus) with ACTN2. Isoform 1 interacts (via N-terminus) with PLEC (via N-terminus). Isoform 3 interacts (via N-terminus) with COL17A1 (via cytoplasmic region). Isoform 3 interacts (via N-terminus) with ITGB4 isoform beta-4a (via cytoplasmic region). Isoform 3 interacts (via N-terminus) with ERBIN (via C-terminus). Isoform 3 associates (via C-terminal) with KRT5-KRT14 (via rod region) intermediate filaments of keratins. Interacts with MAPRE1; probably required for targeting to the growing microtubule plus ends. Interacts with TMIGD2. Isoform 9 interacts with TMEM108. As to expression, isoform 1 is expressed in myoblasts (at protein level). Isoform 3 is expressed in the skin. Isoform 6 is expressed in the brain. Highly expressed in skeletal muscle and cultured keratinocytes.

The protein localises to the cytoplasm. It localises to the cytoskeleton. Its subcellular location is the stress fiber. It is found in the cell projection. The protein resides in the axon. The protein localises to the myofibril. It localises to the sarcomere. Its subcellular location is the z line. It is found in the h zone. The protein resides in the cell junction. The protein localises to the hemidesmosome. It localises to the nucleus. Its subcellular location is the nucleus envelope. It is found in the membrane. The protein resides in the endoplasmic reticulum membrane. The protein localises to the cell cortex. It localises to the cell membrane. Cytoskeletal linker protein. Acts as an integrator of intermediate filaments, actin and microtubule cytoskeleton networks. Required for anchoring either intermediate filaments to the actin cytoskeleton in neural and muscle cells or keratin-containing intermediate filaments to hemidesmosomes in epithelial cells. The proteins may self-aggregate to form filaments or a two-dimensional mesh. Regulates the organization and stability of the microtubule network of sensory neurons to allow axonal transport. Mediates docking of the dynein/dynactin motor complex to vesicle cargos for retrograde axonal transport through its interaction with TMEM108 and DCTN1. In terms of biological role, plays a structural role in the assembly of hemidesmosomes of epithelial cells; anchors keratin-containing intermediate filaments to the inner plaque of hemidesmosomes. Required for the regulation of keratinocyte polarity and motility; mediates integrin ITGB4 regulation of RAC1 activity. Its function is as follows. Required for bundling actin filaments around the nucleus. Functionally, regulates the organization and stability of the microtubule network of sensory neurons to allow axonal transport. The sequence is that of Dystonin from Homo sapiens (Human).